An 851-amino-acid polypeptide reads, in one-letter code: Protein FAM13B (851 aa).

The Rho-GAP domain occupies 23 to 212 (IPLDELQQGG…GLLENYYEFF (190 aa)). The segment covering 556–565 (IKDAKHKNSD) has biased composition (basic and acidic residues). Residues 556 to 611 (IKDAKHKNSDGEFAPQTRPRSNTLPKSFGSSLDHEDGESEGEPRVIQKEKTPSKEA) are disordered. The segment covering 573–585 (RPRSNTLPKSFGS) has biased composition (polar residues). Residues 596–611 (GEPRVIQKEKTPSKEA) are compositionally biased toward basic and acidic residues.

The protein belongs to the FAM13 family.

This Mus musculus (Mouse) protein is Protein FAM13B (Fam13b).